Here is a 132-residue protein sequence, read N- to C-terminus: Large ribosomal subunit protein uL14 (132 aa).

Belongs to the universal ribosomal protein uL14 family. Part of the 50S ribosomal subunit. Forms a cluster with proteins L3 and L24e, part of which may contact the 16S rRNA in 2 intersubunit bridges.

Functionally, binds to 23S rRNA. Forms part of two intersubunit bridges in the 70S ribosome. In Methanococcus maripaludis (strain DSM 14266 / JCM 13030 / NBRC 101832 / S2 / LL), this protein is Large ribosomal subunit protein uL14.